The sequence spans 375 residues: Alpha-1,2-galactosyltransferase (375 aa).

Topologically, residues 1–2 (MR) are cytoplasmic. Residues 3–23 (FAPYLISAVVITTIILGGAWW) form a helical; Signal-anchor for type II membrane protein membrane-spanning segment. At 24-375 (TSAMDTKLQT…HIQNLLKPSS (352 aa)) the chain is on the lumenal side.

This sequence belongs to the glycosyltransferase 34 family. O-glycosylated.

It is found in the golgi apparatus membrane. Its function is as follows. Involved in the O- and N-linked oligosaccharide modification of proteins transported through the Golgi stack. This occurs in cis Golgi where the enzyme transfers galactose from UDP-galactose to a variety of mannose based acceptors. This Schizosaccharomyces pombe (strain 972 / ATCC 24843) (Fission yeast) protein is Alpha-1,2-galactosyltransferase (gma12).